We begin with the raw amino-acid sequence, 246 residues long: MSDQILGVIPARFASTRFPGKPLALIGTKPMIQWTYHHASLSKSFHRLVVATDDKRIHDVVLGFGGESVLTSPDHPTGTDRIIEVAETYPNYGIIVNIQGDEPGMEASLIDGVVGLKTKHRNWEMTTAAVPFTSAEDPKDPNKVKVVFDNKGRANYFSRSPIPASFKGEAKYHRHLGIYAYERDFLMNYNQLPPSDWETVESLEQLRALQNGSTIGVYLSDKANLGVDSPADLEVVITEFKKKGLL.

This sequence belongs to the KdsB family.

It localises to the cytoplasm. It carries out the reaction 3-deoxy-alpha-D-manno-oct-2-ulosonate + CTP = CMP-3-deoxy-beta-D-manno-octulosonate + diphosphate. The protein operates within nucleotide-sugar biosynthesis; CMP-3-deoxy-D-manno-octulosonate biosynthesis; CMP-3-deoxy-D-manno-octulosonate from 3-deoxy-D-manno-octulosonate and CTP: step 1/1. It functions in the pathway bacterial outer membrane biogenesis; lipopolysaccharide biosynthesis. Activates KDO (a required 8-carbon sugar) for incorporation into bacterial lipopolysaccharide in Gram-negative bacteria. This chain is 3-deoxy-manno-octulosonate cytidylyltransferase, found in Leptospira biflexa serovar Patoc (strain Patoc 1 / Ames).